Here is a 401-residue protein sequence, read N- to C-terminus: tRNA(Met) cytidine acetate ligase (401 aa).

ATP is bound by residues valine 7–histidine 20, glycine 101, asparagine 160, and arginine 185–isoleucine 186.

This sequence belongs to the TmcAL family.

Its subcellular location is the cytoplasm. The catalysed reaction is cytidine(34) in elongator tRNA(Met) + acetate + ATP = N(4)-acetylcytidine(34) in elongator tRNA(Met) + AMP + diphosphate. In terms of biological role, catalyzes the formation of N(4)-acetylcytidine (ac(4)C) at the wobble position of elongator tRNA(Met), using acetate and ATP as substrates. First activates an acetate ion to form acetyladenylate (Ac-AMP) and then transfers the acetyl group to tRNA to form ac(4)C34. The chain is tRNA(Met) cytidine acetate ligase from Anoxybacillus flavithermus (strain DSM 21510 / WK1).